A 251-amino-acid chain; its full sequence is uncharacterized protein (251 aa).

Residues 1–18 (MRILIILSIILCSLFARA) form the signal peptide.

This sequence belongs to the MlaA family.

This is an uncharacterized protein from Rickettsia felis (strain ATCC VR-1525 / URRWXCal2) (Rickettsia azadi).